Consider the following 2336-residue polypeptide: Voltage-dependent N-type calcium channel subunit alpha-1B (2336 aa).

Residues 1 to 37 are disordered; the sequence is MVRFGDELGGRYGGTGGGERARGGGAGGAGGPGQGGL. Residues 1–90 lie on the Cytoplasmic side of the membrane; it reads MVRFGDELGG…DNVVRKYAKR (90 aa). The span at 10–37 shows a compositional bias: gly residues; sequence GRYGGTGGGERARGGGAGGAGGPGQGGL. Residue R22 is modified to Omega-N-methylarginine. The I repeat unit spans residues 82–359; sequence NVVRKYAKRI…LVLGVLSGEF (278 aa). A helical transmembrane segment spans residues 91 to 114; it reads ITEWPPFEYMILATIIANCIVLAL. Topologically, residues 115-131 are extracellular; the sequence is EQHLPDGDKTPMSERLD. The chain crosses the membrane as a helical span at residues 132 to 152; it reads DTEPYFIGIFCFEAGIKIIAL. Topologically, residues 153 to 163 are cytoplasmic; that stretch reads GFVFHKGSYLR. The chain crosses the membrane as a helical span at residues 164–182; sequence NGWNVMDFVVVLTEILATA. Over 183–187 the chain is Extracellular; it reads GTDFD. Residues 188–211 form a helical membrane-spanning segment; that stretch reads LRTLRAVRVLRPLKLVSGIPSLQV. The Cytoplasmic segment spans residues 212-221; that stretch reads VLKSIMKAMV. Residues 222–244 form a helical membrane-spanning segment; that stretch reads PLLQIGLLLFFAILMFAIIGLEF. Residues 245–331 are Extracellular-facing; the sequence is YMGKFHKACF…NTNDAAGNTW (87 aa). N256 carries an N-linked (GlcNAc...) asparagine glycan. Residues 332–356 traverse the membrane as a helical segment; the sequence is NWLYFIPLIIIGSFFMLNLVLGVLS. Residues 357–483 lie on the Cytoplasmic side of the membrane; sequence GEFAKERERV…FLIRRMVKAQ (127 aa). Positions 379–396 are binding to the beta subunit; it reads QQIERELNGYLEWIFKAE. S411 carries the post-translational modification Phosphoserine. 452-459 serves as a coordination point for ATP; sequence ASLKSGKT. The II repeat unit spans residues 469–713; sequence EKMFRFLIRR…VFLAIAVDNL (245 aa). A helical membrane pass occupies residues 484–502; it reads SFYWVVLCVVALNTLCVAM. The Extracellular segment spans residues 503-512; it reads VHYNQPQRLT. The helical transmembrane segment at 513–535 threads the bilayer; it reads TALYFAEFVFLGLFLTEMSLKMY. Topologically, residues 536–545 are cytoplasmic; it reads GLGPRSYFRS. S545 contacts a 1,2-diacyl-sn-glycero-3-phospho-(1D-myo-inositol-4,5-bisphosphate). A helical transmembrane segment spans residues 546–567; sequence SFNCFDFGVIVGSIFEVVWAAI. Over 568–574 the chain is Extracellular; sequence KPGTSFG. A helical membrane pass occupies residues 575-587; that stretch reads ISVLRALRLLRIF. The a 1,2-diacyl-sn-glycero-3-phospho-(1D-myo-inositol-4,5-bisphosphate) site is built by R585 and K588. Over 588–605 the chain is Cytoplasmic; sequence KVTKYWNSLRNLVVSLLN. A helical transmembrane segment spans residues 606 to 631; sequence SMKSIISLLFLLFLFIVVFALLGMQL. The Extracellular portion of the chain corresponds to 632–683; the sequence is FGGQFNFQDETPTTNFDTFPAAILTVFQILTGEDWNAVMYHGIESQGGVSKG. Residues 684–710 traverse the membrane as a helical segment; that stretch reads MFSSFYFIVLTLFGNYTLLNVFLAIAV. The Cytoplasmic portion of the chain corresponds to 711-1149; the sequence is DNLANAQELT…FCHYIVTMRY (439 aa). Phosphoserine occurs at positions 746, 749, and 784. Disordered stretches follow at residues 800–1021 and 1051–1076; these read YAST…HQPK and EQPE…STTV. Basic and acidic residues-rich tracts occupy residues 806–827, 870–891, 920–930, 938–948, 970–981, and 996–1021; these read VRPD…RDGL, EQDR…EERA, GSPEEATEREP, HAQDSSKEGKE, GPRETENSEEPT, and PPER…HQPK. The span at 1059–1076 shows a compositional bias: polar residues; the sequence is QRNVTRMGSQPSDPSTTV. The residue at position 1067 (S1067) is a Phosphoserine. An III repeat occupies 1135–1421; sequence NLLRRFCHYI…IFVALIIITF (287 aa). Residues 1150 to 1168 form a helical membrane-spanning segment; it reads FEMVILVVIALSSIALAAE. Topologically, residues 1169-1176 are extracellular; the sequence is DPVRTDSF. A helical membrane pass occupies residues 1177–1201; the sequence is RNNALKYMDYIFTGVFTFEMVIKMI. At 1202 to 1215 the chain is on the cytoplasmic side; that stretch reads DLGLLLHPGAYFRD. Residues 1216–1240 traverse the membrane as a helical segment; it reads LWNILDFIVVSGALVAFAFSSFMGG. Over 1241–1246 the chain is Extracellular; it reads SKGKDI. Residues 1247 to 1267 traverse the membrane as a helical segment; that stretch reads NTIKSLRVLRVLRPLKTIKRL. Topologically, residues 1268 to 1285 are cytoplasmic; sequence PKLKAVFDCVVNSLKNVL. The helical transmembrane segment at 1286–1305 threads the bilayer; that stretch reads NILIVYMLFMFIFAVIAVQL. Residues 1306 to 1392 lie on the Extracellular side of the membrane; the sequence is FKGKFFYCTD…EQGPSPGFRM (87 aa). A helical transmembrane segment spans residues 1393–1418; that stretch reads ELSIFYVVYFVVFPFFFVNIFVALII. Residues 1419-1473 lie on the Cytoplasmic side of the membrane; that stretch reads ITFQEQGDKVMSECSLEKNERACIDFAISAKPLTRYMPQNKQSFQYKTWTFVVSP. The stretch at 1458–1711 is one IV repeat; sequence NKQSFQYKTW…LFVAVIMDNF (254 aa). Residues 1474–1492 traverse the membrane as a helical segment; sequence PFEYFIMAMIALNTVVLMM. The Extracellular portion of the chain corresponds to 1493-1500; it reads KFYDAPYE. The helical transmembrane segment at 1501 to 1525 threads the bilayer; it reads YELMLKCLNIVFTSMFSLECILKII. Residues 1526–1535 are Cytoplasmic-facing; that stretch reads AFGVLNYFRD. Residues 1536–1557 form a helical membrane-spanning segment; it reads AWNVFDFVTVLGSITDILVTEI. Topologically, residues 1558–1563 are extracellular; sequence ANNFIN. N1563 carries an N-linked (GlcNAc...) asparagine glycan. Residues 1564–1582 form a helical membrane-spanning segment; that stretch reads LSFLRLFRAARLIKLCRQG. The Cytoplasmic segment spans residues 1583-1601; it reads YTIRILLWTFVQSFKALPY. The helical transmembrane segment at 1602-1621 threads the bilayer; sequence VCLLIAMLFFIYAIIGMQVF. Over 1622–1683 the chain is Extracellular; that stretch reads GNIALDDGTS…ANASECGSDF (62 aa). N1675 carries N-linked (GlcNAc...) asparagine glycosylation. Residues 1684 to 1707 traverse the membrane as a helical segment; the sequence is AYFYFVSFIFLCSFLMLNLFVAVI. Over 1708 to 2336 the chain is Cytoplasmic; that stretch reads MDNFEYLTRD…YHHPDQDHWC (629 aa). An EF-hand domain is found at 1724-1759; that stretch reads HHLDEFIRVWAEYDPAACGRISYNDMFEMLKHMSPP. Ca(2+) is bound by residues D1737, R1743, and D1748. Residues 1981–2202 are disordered; it reads TLRGPDGEPQ…TPRPSITYKT (222 aa). Over residues 2048-2062 the composition is skewed to basic residues; that stretch reads SHHHHHRCHRRRDKK. S2065 carries the phosphoserine modification. Positions 2097–2113 are enriched in basic and acidic residues; that stretch reads CRRERKQERGRSQERRQ. A compositionally biased stretch (polar residues) spans 2161–2177; it reads GSGSVNGSPLMSTSGAS. A phosphoserine mark is found at S2221, S2230, and S2253.

This sequence belongs to the calcium channel alpha-1 subunit (TC 1.A.1.11) family. CACNA1B subfamily. Multisubunit complex consisting of alpha-1, alpha-2, beta and delta subunits in a 1:1:1:1 ratio. The channel activity is directed by the pore-forming and voltage-sensitive alpha-1 subunit. In many cases, this subunit is sufficient to generate voltage-sensitive calcium channel activity. The auxiliary subunits beta and alpha-2/delta linked by a disulfide bridge regulate the channel activity. Interacts with RIMS1. Interacts with FMR1 (via C-terminus); this interaction induces a decrease in the number of presynaptic functional CACNA1B channels at the cell surface. In terms of processing, phosphorylated in vitro by CaM-kinase II, PKA, PKC and CGPK. In terms of tissue distribution, central nervous system.

The protein localises to the membrane. The enzyme catalyses Ca(2+)(in) = Ca(2+)(out). With respect to regulation, is specifically blocked by omega-conotoxin GVIA. Is specifically blocked by omega-conotoxin MVIIA (ziconotide). Is insensitive to dihydropyridines (DHP). In terms of biological role, voltage-sensitive calcium channels (VSCC) mediate the entry of calcium ions into excitable cells and are also involved in a variety of calcium-dependent processes, including muscle contraction, hormone or neurotransmitter release, gene expression, cell motility, cell division and cell death. This alpha-1B subunit gives rise to N-type calcium currents. N-type calcium channels belong to the 'high-voltage activated' (HVA) group. They are involved in pain signaling. Calcium channels containing alpha-1B subunit may play a role in directed migration of immature neurons. Mediates Ca(2+) release probability at hippocampal neuronal soma and synaptic terminals. The chain is Voltage-dependent N-type calcium channel subunit alpha-1B (Cacna1b) from Rattus norvegicus (Rat).